A 249-amino-acid polypeptide reads, in one-letter code: Homeobox protein TGIF2LX (249 aa).

Disordered regions lie at residues 1–62 (MEAA…KRKG) and 126–192 (DPIV…KLTV). A compositionally biased stretch (basic and acidic residues) spans 9 to 27 (AETRSRVEKDSRRAKKDSP). The segment covering 28 to 46 (AKTQSPAQDTSIMLRNNAD) has biased composition (polar residues). The homeobox; TALE-type DNA-binding region spans 55–118 (EHKKKRKGYL…INARRRILPD (64 aa)). The segment covering 159-172 (DNVQSLPLRSSPKG) has biased composition (polar residues).

Belongs to the TALE/TGIF homeobox family.

The protein resides in the nucleus. Its function is as follows. May have a transcription role in testis. This Macaca fascicularis (Crab-eating macaque) protein is Homeobox protein TGIF2LX (TGIF2LX).